Consider the following 300-residue polypeptide: Bifunctional protein FolD (300 aa).

Residues 169–171 (GRG), Ser196, and Ile237 each bind NADP(+).

Belongs to the tetrahydrofolate dehydrogenase/cyclohydrolase family. In terms of assembly, homodimer.

It catalyses the reaction (6R)-5,10-methylene-5,6,7,8-tetrahydrofolate + NADP(+) = (6R)-5,10-methenyltetrahydrofolate + NADPH. It carries out the reaction (6R)-5,10-methenyltetrahydrofolate + H2O = (6R)-10-formyltetrahydrofolate + H(+). It functions in the pathway one-carbon metabolism; tetrahydrofolate interconversion. In terms of biological role, catalyzes the oxidation of 5,10-methylenetetrahydrofolate to 5,10-methenyltetrahydrofolate and then the hydrolysis of 5,10-methenyltetrahydrofolate to 10-formyltetrahydrofolate. The chain is Bifunctional protein FolD from Clavibacter sepedonicus (Clavibacter michiganensis subsp. sepedonicus).